A 158-amino-acid chain; its full sequence is Peptide methionine sulfoxide reductase MsrA (158 aa).

C10 is a catalytic residue.

The protein belongs to the MsrA Met sulfoxide reductase family.

The catalysed reaction is L-methionyl-[protein] + [thioredoxin]-disulfide + H2O = L-methionyl-(S)-S-oxide-[protein] + [thioredoxin]-dithiol. It catalyses the reaction [thioredoxin]-disulfide + L-methionine + H2O = L-methionine (S)-S-oxide + [thioredoxin]-dithiol. In terms of biological role, has an important function as a repair enzyme for proteins that have been inactivated by oxidation. Catalyzes the reversible oxidation-reduction of methionine sulfoxide in proteins to methionine. In Alkaliphilus metalliredigens (strain QYMF), this protein is Peptide methionine sulfoxide reductase MsrA.